We begin with the raw amino-acid sequence, 510 residues long: NAD(P)H-quinone oxidoreductase subunit 2 A, chloroplastic (510 aa).

13 helical membrane passes run 24 to 44 (LLLFHGSFIFPECILIFGLIL), 59 to 79 (WFYFISSTSLVMSITALLFRW), 99 to 119 (IFQFLILLCSTLCIPLSVEYI), 124 to 144 (MAITEFLLFVLTATLGGMFLC), 149 to 169 (LITIFVAPECFSLCSYLLSGY), 183 to 203 (YLLMGGASSSILVHGFSWLYG), 229 to 249 (ISIALLSITVGIGFKLSPAPF), 295 to 315 (WHLLLEILAILSMILGNLIAI), 323 to 343 (MLAYSSIGQIGYVIIGIIVGD), 347 to 367 (GYASMITYMLFYISMNLGTFA), 395 to 415 (ALSSALCLLSLGGIPPLAGFF), 418 to 438 (LHLFWCGWQAGLYFLVSIGLL), and 484 to 504 (MIVCVIASTIPGISMNPIIAI).

It belongs to the complex I subunit 2 family. In terms of assembly, NDH is composed of at least 16 different subunits, 5 of which are encoded in the nucleus.

Its subcellular location is the plastid. The protein resides in the chloroplast thylakoid membrane. It carries out the reaction a plastoquinone + NADH + (n+1) H(+)(in) = a plastoquinol + NAD(+) + n H(+)(out). It catalyses the reaction a plastoquinone + NADPH + (n+1) H(+)(in) = a plastoquinol + NADP(+) + n H(+)(out). NDH shuttles electrons from NAD(P)H:plastoquinone, via FMN and iron-sulfur (Fe-S) centers, to quinones in the photosynthetic chain and possibly in a chloroplast respiratory chain. The immediate electron acceptor for the enzyme in this species is believed to be plastoquinone. Couples the redox reaction to proton translocation, and thus conserves the redox energy in a proton gradient. The chain is NAD(P)H-quinone oxidoreductase subunit 2 A, chloroplastic from Amborella trichopoda.